The following is a 164-amino-acid chain: Transcriptional repressor NrdR (164 aa).

A zinc finger spans residues 3 to 34 (CPFCRHDDTQVVDSRVSEDGAAIRRRRRCPAC). In terms of domain architecture, ATP-cone spans 49 to 139 (PSVVKKDGSR…VYRRFEDVSE (91 aa)).

The protein belongs to the NrdR family. Zn(2+) is required as a cofactor.

Negatively regulates transcription of bacterial ribonucleotide reductase nrd genes and operons by binding to NrdR-boxes. The protein is Transcriptional repressor NrdR of Paraburkholderia phymatum (strain DSM 17167 / CIP 108236 / LMG 21445 / STM815) (Burkholderia phymatum).